Here is a 685-residue protein sequence, read N- to C-terminus: Sorbicillinoid biosynthetic cluster transcription factor sor4 (685 aa).

A compositionally biased stretch (low complexity) spans 1–14; it reads MGSSATATTTGEST. The tract at residues 1–20 is disordered; that stretch reads MGSSATATTTGESTRQQPGL. The zn(2)-C6 fungal-type DNA-binding region spans 22-49; that stretch reads CEECRRRKARCDRVRPKCGICADSGRNC. The interval 81 to 112 is disordered; the sequence is GQNDAPSLPQERDSLGCPTPSEKVSPEGDLVS.

The protein resides in the nucleus. Transcription factor that acts as the main regulator of the gene cluster that mediates the biosynthesis of sorbicillinoids, a diverse group of yellow secondary metabolites that restrict growth of competing pathogenic fungi but not of bacteria. This chain is Sorbicillinoid biosynthetic cluster transcription factor sor4, found in Hypocrea jecorina (strain QM6a) (Trichoderma reesei).